The following is a 98-amino-acid chain: NADH-ubiquinone oxidoreductase chain 4L (98 aa).

The next 3 membrane-spanning stretches (helical) occupy residues 1–21 (MASI…GVLI), 26–46 (LMST…MMTL), and 59–79 (APLI…ALLV).

It belongs to the complex I subunit 4L family. Core subunit of respiratory chain NADH dehydrogenase (Complex I) which is composed of 45 different subunits.

Its subcellular location is the mitochondrion inner membrane. It carries out the reaction a ubiquinone + NADH + 5 H(+)(in) = a ubiquinol + NAD(+) + 4 H(+)(out). Functionally, core subunit of the mitochondrial membrane respiratory chain NADH dehydrogenase (Complex I) which catalyzes electron transfer from NADH through the respiratory chain, using ubiquinone as an electron acceptor. Part of the enzyme membrane arm which is embedded in the lipid bilayer and involved in proton translocation. The protein is NADH-ubiquinone oxidoreductase chain 4L (MT-ND4L) of Caenolestes fuliginosus (Shrew opossum).